The sequence spans 438 residues: Adenylyltransferase and sulfurtransferase MOCS3 (438 aa).

ATP-binding positions include Gly80, Asp101, Thr108 to Arg112, Lys125, and Asp169 to Asn170. Zn(2+) contacts are provided by Cys210 and Cys213. Cys227 (glycyl thioester intermediate; for adenylyltransferase activity) is an active-site residue. Cys285 and Cys288 together coordinate Zn(2+). One can recognise a Rhodanese domain in the interval Ser335–Pro436. The active-site Cysteine persulfide intermediate; for sulfurtransferase activity is Cys392.

This sequence in the N-terminal section; belongs to the HesA/MoeB/ThiF family. UBA4 subfamily. The cofactor is Zn(2+).

Its subcellular location is the cytoplasm. It is found in the cytosol. It carries out the reaction [molybdopterin-synthase sulfur-carrier protein]-C-terminal Gly-Gly + ATP + H(+) = [molybdopterin-synthase sulfur-carrier protein]-C-terminal Gly-Gly-AMP + diphosphate. It catalyses the reaction [molybdopterin-synthase sulfur-carrier protein]-C-terminal Gly-Gly-AMP + S-sulfanyl-L-cysteinyl-[cysteine desulfurase] + AH2 = [molybdopterin-synthase sulfur-carrier protein]-C-terminal-Gly-aminoethanethioate + L-cysteinyl-[cysteine desulfurase] + A + AMP + 2 H(+). The protein operates within tRNA modification; 5-methoxycarbonylmethyl-2-thiouridine-tRNA biosynthesis. Its pathway is cofactor biosynthesis; molybdopterin biosynthesis. Functionally, plays a central role in 2-thiolation of mcm(5)S(2)U at tRNA wobble positions of cytosolic tRNA(Lys), tRNA(Glu) and tRNA(Gln). Also essential during biosynthesis of the molybdenum cofactor. Acts by mediating the C-terminal thiocarboxylation of sulfur carriers URM1 and MOCS2A. Its N-terminus first activates URM1 and MOCS2A as acyl-adenylates (-COAMP), then the persulfide sulfur on the catalytic cysteine is transferred to URM1 and MOCS2A to form thiocarboxylation (-COSH) of their C-terminus. The reaction probably involves hydrogen sulfide that is generated from the persulfide intermediate and that acts as a nucleophile towards URM1 and MOCS2A. Subsequently, a transient disulfide bond is formed. Does not use thiosulfate as sulfur donor; NFS1 probably acting as a sulfur donor for thiocarboxylation reactions. The chain is Adenylyltransferase and sulfurtransferase MOCS3 from Culex quinquefasciatus (Southern house mosquito).